The primary structure comprises 239 residues: Tetratricopeptide repeat protein 9B (239 aa).

Residues 1 to 54 (MQRGALSPVLMLSAAPEPPPRPPPALSPPGPGSAPRHGSARSGPAPEPSGGLAA) are disordered. 2 positions are modified to phosphoserine: Ser-7 and Ser-27. Residues 16-32 (PEPPPRPPPALSPPGPG) show a composition bias toward pro residues. One copy of the TPR 1 repeat lies at 63-97 (AVAFKAEGQRCYREKKFREAIGKYHRALLQLKAAQ). The segment at 98 to 121 (GARPGGLPTPSPGPTTSPGPARLS) is disordered. A compositionally biased stretch (pro residues) spans 104-114 (LPTPSPGPTTS). One copy of the TPR 2 repeat lies at 169–202 (FKATYRAGIAFYHLGDYARALRYLQEARSREPTD).

Belongs to the TTC9 family.

The protein is Tetratricopeptide repeat protein 9B (Ttc9b) of Mus musculus (Mouse).